Here is a 127-residue protein sequence, read N- to C-terminus: Large ribosomal subunit protein uL22 (127 aa).

Residues 106 to 117 show a composition bias toward low complexity; it reads GAPEGVPVGGAV. The interval 106–127 is disordered; that stretch reads GAPEGVPVGGAVDTPGDEEEEE.

This sequence belongs to the universal ribosomal protein uL22 family. As to quaternary structure, part of the 50S ribosomal subunit.

Functionally, this protein binds specifically to 23S rRNA; its binding is stimulated by other ribosomal proteins, e.g. L4, L17, and L20. It is important during the early stages of 50S assembly. It makes multiple contacts with different domains of the 23S rRNA in the assembled 50S subunit and ribosome. Its function is as follows. The globular domain of the protein is located near the polypeptide exit tunnel on the outside of the subunit, while an extended beta-hairpin is found that lines the wall of the exit tunnel in the center of the 70S ribosome. The protein is Large ribosomal subunit protein uL22 of Rubrobacter xylanophilus (strain DSM 9941 / JCM 11954 / NBRC 16129 / PRD-1).